Reading from the N-terminus, the 543-residue chain is Chaperonin GroEL (543 aa).

ATP is bound by residues 30 to 33 (TLGP), Lys51, 87 to 91 (DGTTT), Gly415, 480 to 482 (NAL), and Asp496.

It belongs to the chaperonin (HSP60) family. In terms of assembly, forms a cylinder of 14 subunits composed of two heptameric rings stacked back-to-back. Interacts with the co-chaperonin GroES.

It localises to the cytoplasm. It catalyses the reaction ATP + H2O + a folded polypeptide = ADP + phosphate + an unfolded polypeptide.. Functionally, together with its co-chaperonin GroES, plays an essential role in assisting protein folding. The GroEL-GroES system forms a nano-cage that allows encapsulation of the non-native substrate proteins and provides a physical environment optimized to promote and accelerate protein folding. This chain is Chaperonin GroEL, found in Gemmatimonas aurantiaca (strain DSM 14586 / JCM 11422 / NBRC 100505 / T-27).